We begin with the raw amino-acid sequence, 295 residues long: 4-hydroxy-tetrahydrodipicolinate synthase (295 aa).

Thr-46 contacts pyruvate. Tyr-135 (proton donor/acceptor) is an active-site residue. The active-site Schiff-base intermediate with substrate is Lys-164. Position 205 (Ile-205) interacts with pyruvate.

The protein belongs to the DapA family. In terms of assembly, homotetramer; dimer of dimers.

Its subcellular location is the cytoplasm. It catalyses the reaction L-aspartate 4-semialdehyde + pyruvate = (2S,4S)-4-hydroxy-2,3,4,5-tetrahydrodipicolinate + H2O + H(+). It participates in amino-acid biosynthesis; L-lysine biosynthesis via DAP pathway; (S)-tetrahydrodipicolinate from L-aspartate: step 3/4. Its function is as follows. Catalyzes the condensation of (S)-aspartate-beta-semialdehyde [(S)-ASA] and pyruvate to 4-hydroxy-tetrahydrodipicolinate (HTPA). In Aliarcobacter butzleri (strain RM4018) (Arcobacter butzleri), this protein is 4-hydroxy-tetrahydrodipicolinate synthase.